A 247-amino-acid polypeptide reads, in one-letter code: Cell division protein ZapD (247 aa).

This sequence belongs to the ZapD family. In terms of assembly, interacts with FtsZ.

Its subcellular location is the cytoplasm. Functionally, cell division factor that enhances FtsZ-ring assembly. Directly interacts with FtsZ and promotes bundling of FtsZ protofilaments, with a reduction in FtsZ GTPase activity. The protein is Cell division protein ZapD of Shigella boydii serotype 4 (strain Sb227).